Reading from the N-terminus, the 265-residue chain is Type III pantothenate kinase (265 aa).

An ATP-binding site is contributed by 6–13 (DVGNTNIV). 112-115 (GADR) lines the substrate pocket. D114 serves as the catalytic Proton acceptor. D134 lines the K(+) pocket. T137 serves as a coordination point for ATP. Residue T189 coordinates substrate.

The protein belongs to the type III pantothenate kinase family. Homodimer. NH4(+) is required as a cofactor. K(+) serves as cofactor.

It localises to the cytoplasm. The enzyme catalyses (R)-pantothenate + ATP = (R)-4'-phosphopantothenate + ADP + H(+). The protein operates within cofactor biosynthesis; coenzyme A biosynthesis; CoA from (R)-pantothenate: step 1/5. In terms of biological role, catalyzes the phosphorylation of pantothenate (Pan), the first step in CoA biosynthesis. In Saccharopolyspora erythraea (strain ATCC 11635 / DSM 40517 / JCM 4748 / NBRC 13426 / NCIMB 8594 / NRRL 2338), this protein is Type III pantothenate kinase.